The sequence spans 90 residues: Translation initiation factor IF-1 (90 aa).

Residues 7–76 form the S1-like domain; sequence KEDVIRMEGT…TRGRIVYRKK (70 aa).

It belongs to the IF-1 family. As to quaternary structure, component of the 30S ribosomal translation pre-initiation complex which assembles on the 30S ribosome in the order IF-2 and IF-3, IF-1 and N-formylmethionyl-tRNA(fMet); mRNA recruitment can occur at any time during PIC assembly.

It is found in the cytoplasm. Its function is as follows. One of the essential components for the initiation of protein synthesis. Stabilizes the binding of IF-2 and IF-3 on the 30S subunit to which N-formylmethionyl-tRNA(fMet) subsequently binds. Helps modulate mRNA selection, yielding the 30S pre-initiation complex (PIC). Upon addition of the 50S ribosomal subunit IF-1, IF-2 and IF-3 are released leaving the mature 70S translation initiation complex. This chain is Translation initiation factor IF-1, found in Fervidobacterium nodosum (strain ATCC 35602 / DSM 5306 / Rt17-B1).